Here is a 704-residue protein sequence, read N- to C-terminus: Serotransferrin (704 aa).

The N-terminal stretch at 1 to 19 is a signal peptide; it reads MRPAVRALLACAVLGLCLA. Transferrin-like domains are found at residues 25-351 and 364-689; these read VRWC…NLRE and VKWC…NLRQ. Cystine bridges form between cysteine 28–cysteine 66 and cysteine 38–cysteine 57. Arginine 42 is modified (dimethylated arginine). Positions 81 and 113 each coordinate Fe(3+). 5 disulfide bridges follow: cysteine 136-cysteine 217, cysteine 176-cysteine 192, cysteine 179-cysteine 200, cysteine 189-cysteine 202, and cysteine 250-cysteine 264. Threonine 138, arginine 142, alanine 144, and glycine 145 together coordinate hydrogencarbonate. Tyrosine 211 contributes to the Fe(3+) binding site. Residue histidine 272 participates in Fe(3+) binding. Intrachain disulfides connect cysteine 362/cysteine 622, cysteine 367/cysteine 399, cysteine 377/cysteine 390, cysteine 424/cysteine 699, cysteine 441/cysteine 663, cysteine 473/cysteine 549, cysteine 497/cysteine 690, cysteine 507/cysteine 521, cysteine 518/cysteine 532, cysteine 589/cysteine 603, and cysteine 641/cysteine 646. The Fe(3+) site is built by aspartate 414 and tyrosine 449. The hydrogencarbonate site is built by threonine 475, arginine 479, alanine 481, and glycine 482. N-linked (GlcNAc...) asparagine glycosylation is present at asparagine 514. Tyrosine 543 is a binding site for Fe(3+). Residue histidine 611 participates in Fe(3+) binding. Serine 691 is modified (phosphoserine).

This sequence belongs to the transferrin family. As to quaternary structure, monomer. Part of a complex composed of SLC40A1/ferroportin, TF/transferrin and HEPH/hephaestin that transfers iron from cells to transferrin. Expressed by the liver and secreted in plasma.

It is found in the secreted. Functionally, transferrins are iron binding transport proteins which can bind two Fe(3+) ions in association with the binding of an anion, usually bicarbonate. It is responsible for the transport of iron from sites of absorption and heme degradation to those of storage and utilization. Serum transferrin may also have a further role in stimulating cell proliferation. The chain is Serotransferrin (TF) from Bos taurus (Bovine).